Here is a 277-residue protein sequence, read N- to C-terminus: MQTEKQSRDVFYVSDGTAITCETLGHVVLGQFPFVANEKTFPFVESEEKLTELIKHIEISFQTNGIKPLVFFSLVLPDLKARLMESPAYCYDVLESIVQRVKDDIQMEPTPKLQRSRSVGKDTDTYFDRIAAIEYTLAHDDGISLKGLELADIILLGVSRSGKTPTSLYMAMQFGLRVVNYPYIDDDIKGLKLLPEFEIHRHKLFGLTIDPERLTEIRENRLAGSDYASTEQCQHELANVEALFRREAIPYINTTSLSVEEISTRVLEKTGLKRRLF.

Position 157–164 (157–164) interacts with ADP; that stretch reads GVSRSGKT.

This sequence belongs to the pyruvate, phosphate/water dikinase regulatory protein family. PSRP subfamily.

It carries out the reaction [pyruvate, water dikinase] + ADP = [pyruvate, water dikinase]-phosphate + AMP + H(+). The enzyme catalyses [pyruvate, water dikinase]-phosphate + phosphate + H(+) = [pyruvate, water dikinase] + diphosphate. Functionally, bifunctional serine/threonine kinase and phosphorylase involved in the regulation of the phosphoenolpyruvate synthase (PEPS) by catalyzing its phosphorylation/dephosphorylation. The chain is Putative phosphoenolpyruvate synthase regulatory protein from Vibrio vulnificus (strain CMCP6).